We begin with the raw amino-acid sequence, 204 residues long: Guanylate kinase (204 aa).

One can recognise a Guanylate kinase-like domain in the interval 18–196 (PKLFTISAPA…SYEILKSIFI (179 aa)). 25-32 (APAGAGKT) contacts ATP.

This sequence belongs to the guanylate kinase family.

It is found in the cytoplasm. The enzyme catalyses GMP + ATP = GDP + ADP. In terms of biological role, essential for recycling GMP and indirectly, cGMP. The protein is Guanylate kinase of Chlamydia felis (strain Fe/C-56) (Chlamydophila felis).